Here is a 279-residue protein sequence, read N- to C-terminus: Lectin 9 (279 aa).

A signal peptide spans 1–23 (MALSSALIKIFITFLFLQNHVNS). 4 N-linked (GlcNAc...) asparagine glycosylation sites follow: Asn116, Asn139, Asn235, and Asn272.

This sequence belongs to the leguminous lectin family.

May be involved in arbuscular mycorrhizal (AM) symbiosis with AM fungi. In Medicago truncatula (Barrel medic), this protein is Lectin 9.